Consider the following 363-residue polypeptide: 5-formaminoimidazole-4-carboxamide-1-(beta)-D-ribofuranosyl 5'-monophosphate synthetase (363 aa).

Positions 29 and 96 each coordinate 5-amino-1-(5-phospho-beta-D-ribosyl)imidazole-4-carboxamide. In terms of domain architecture, ATP-grasp spans 118–354 (RDILRWEAER…IALEIKNAIK (237 aa)). Residues 148 to 210 (PSEI…CNYC) and Glu-232 contribute to the ATP site. Asn-260 contacts 5-amino-1-(5-phospho-beta-D-ribosyl)imidazole-4-carboxamide. Positions 299 and 312 each coordinate Mg(2+).

It belongs to the phosphohexose mutase family. The cofactor is Mg(2+). Requires Mn(2+) as cofactor.

The enzyme catalyses 5-amino-1-(5-phospho-beta-D-ribosyl)imidazole-4-carboxamide + formate + ATP = 5-formamido-1-(5-phospho-D-ribosyl)imidazole-4-carboxamide + ADP + phosphate. It participates in purine metabolism; IMP biosynthesis via de novo pathway; 5-formamido-1-(5-phospho-D-ribosyl)imidazole-4-carboxamide from 5-amino-1-(5-phospho-D-ribosyl)imidazole-4-carboxamide (formate route): step 1/1. Catalyzes the ATP- and formate-dependent formylation of 5-aminoimidazole-4-carboxamide-1-beta-d-ribofuranosyl 5'-monophosphate (AICAR) to 5-formaminoimidazole-4-carboxamide-1-beta-d-ribofuranosyl 5'-monophosphate (FAICAR) in the absence of folates. This Methanobrevibacter smithii (strain ATCC 35061 / DSM 861 / OCM 144 / PS) protein is 5-formaminoimidazole-4-carboxamide-1-(beta)-D-ribofuranosyl 5'-monophosphate synthetase.